Consider the following 436-residue polypeptide: 3-ketoacyl-CoA thiolase (436 aa).

The active-site Acyl-thioester intermediate is Cys99. Residues His392 and Cys422 each act as proton acceptor in the active site.

Belongs to the thiolase-like superfamily. Thiolase family. Heterotetramer of two alpha chains (FadJ) and two beta chains (FadI).

It localises to the cytoplasm. The catalysed reaction is an acyl-CoA + acetyl-CoA = a 3-oxoacyl-CoA + CoA. It functions in the pathway lipid metabolism; fatty acid beta-oxidation. Functionally, catalyzes the final step of fatty acid oxidation in which acetyl-CoA is released and the CoA ester of a fatty acid two carbons shorter is formed. The polypeptide is 3-ketoacyl-CoA thiolase (Shigella boydii serotype 18 (strain CDC 3083-94 / BS512)).